We begin with the raw amino-acid sequence, 496 residues long: Proline--tRNA ligase (496 aa).

Belongs to the class-II aminoacyl-tRNA synthetase family. ProS type 3 subfamily. As to quaternary structure, homodimer.

The protein resides in the cytoplasm. It carries out the reaction tRNA(Pro) + L-proline + ATP = L-prolyl-tRNA(Pro) + AMP + diphosphate. Its function is as follows. Catalyzes the attachment of proline to tRNA(Pro) in a two-step reaction: proline is first activated by ATP to form Pro-AMP and then transferred to the acceptor end of tRNA(Pro). The sequence is that of Proline--tRNA ligase from Phocaeicola vulgatus (strain ATCC 8482 / DSM 1447 / JCM 5826 / CCUG 4940 / NBRC 14291 / NCTC 11154) (Bacteroides vulgatus).